The sequence spans 544 residues: T-complex protein 1 subunit gamma (544 aa).

Residues Cys368 and Cys374 are joined by a disulfide bond. Positions 525-544 are disordered; it reads SKKRGGNEPTNPAAMAQGQE.

Belongs to the TCP-1 chaperonin family. As to quaternary structure, heterooligomeric complex of about 850 to 900 kDa that forms two stacked rings, 12 to 16 nm in diameter.

It is found in the cytoplasm. Molecular chaperone; assists the folding of proteins upon ATP hydrolysis. Known to play a role, in vitro, in the folding of actin and tubulin. This is T-complex protein 1 subunit gamma from Drosophila melanogaster (Fruit fly).